The primary structure comprises 91 residues: Potassium channel toxin TtrKIK (91 aa).

An N-terminal signal peptide occupies residues 1-25 (MVATNRCCVFALLFALLLVHSLTEA). Residues 26 to 44 (GKGKEVLGKIKDKLIEAKD) constitute a propeptide that is removed on maturation. The BetaSPN-type CS-alpha/beta domain maps to 58–91 (EYACPAIEKFCEDHCAAKKAVGKCDDFKCNCIKL). 3 cysteine pairs are disulfide-bonded: cysteine 61/cysteine 81, cysteine 68/cysteine 86, and cysteine 72/cysteine 88.

The protein belongs to the long chain scorpion toxin family. Class 2 subfamily. Expressed by the venom gland.

The protein localises to the secreted. Functionally, the full peptide presents antibacterial and cytotoxic activities. The synthetic C-terminus (AA 33-76) inhibits voltage-gated potassium channels Kv1.1/KCNA1, Kv1.2/KCNA2, and Kv1.3/KCNA3. This chain is Potassium channel toxin TtrKIK, found in Tityus trivittatus (Argentinean scorpion).